Here is a 181-residue protein sequence, read N- to C-terminus: Large ribosomal subunit protein uL5c (181 aa).

The protein belongs to the universal ribosomal protein uL5 family. In terms of assembly, part of the 50S ribosomal subunit; contacts the 5S rRNA.

Its subcellular location is the plastid. The protein localises to the chloroplast. Functionally, binds 5S rRNA, forms part of the central protuberance of the 50S subunit. In Guillardia theta (Cryptophyte), this protein is Large ribosomal subunit protein uL5c (rpl5).